A 337-amino-acid polypeptide reads, in one-letter code: MPRVKLGTQGLEVSKLGFGCMGLSGDYNDALPEEQGIAVIKEAFNCGITFFDTSDIYGENGSNEELLGKALKQLPREKIQVGTKFGIHEIGFSGVKAKGTPDYVRSCCEASLKRLDVDYIDLFYIHRIDTTVPIEITMGELKKLVEEGKIKYVGLSEASPDTIRRAHAVHPVTALQIEYSLWTRDIEDEIVPLCRQLGIGIVPYSPIGRGLFAGKAIKESLPENSVLTSHPRFVGENLEKNKQIYYRIEALSQKHGCTPVQLALAWVLHQGEDVVPIPGTTKIKNLHNNVGALKVKLTKEDLKEISDAVPLDEVAGESIHEVIAVTNWKFANTPPLK.

Residue Tyr57 is the Proton donor of the active site. His126 is a substrate binding site. 205-214 (SPIGRGLFAG) is an NADP(+) binding site.

This sequence belongs to the aldo/keto reductase family.

It catalyses the reaction raucaffrinoline + NADP(+) = perakine + NADPH + H(+). Aldo-keto reductase involved in the biosynthesis of monoterpenoid indole alkaloids. Broad substrate specificity enzyme with a high selectivity in the group of alkaloids. Can use perakine, 19(S),20(R)-dihydro-peraksine-17,21-al, cinnamic aldehyde, p-coumaric aldehyde and 3-(3,4,5-trimethoxyphenyl)propanal as substrates, but not ketosteroids such as progesterone. NADPH could not be replaced by NADH. The sequence is that of Perakine reductase (PR) from Rauvolfia serpentina (Serpentine wood).